We begin with the raw amino-acid sequence, 25 residues long: Phospholipase A1 verutoxin-2a (25 aa).

This sequence belongs to the AB hydrolase superfamily. Lipase family. Contains six disulfide bonds. Expressed by the venom gland.

Its subcellular location is the secreted. It catalyses the reaction a 1,2-diacyl-sn-glycero-3-phosphocholine + H2O = a 2-acyl-sn-glycero-3-phosphocholine + a fatty acid + H(+). The catalysed reaction is 1-(9Z-octadecenoyl)-2-hexadecanoyl-sn-glycero-3-phosphocholine + H2O = 2-hexadecanoyl-sn-glycero-3-phosphocholine + (9Z)-octadecenoate + H(+). It carries out the reaction a 1-acyl-sn-glycero-3-phosphocholine + H2O = sn-glycerol 3-phosphocholine + a fatty acid + H(+). The protein operates within phospholipid metabolism. With respect to regulation, activity is maximal in the presence of calcium. However, unlike phospholipases A2 whose catalytic activity is strictly calcium-dependent, this enzyme shows considerable catalytic activity on phosphatidylcholine emulsified in calcium free solution; the catalytic activity of VT-2a assayed in the absence of calcium ions is 18-20% of that assayed in solution containing calcium ions. In terms of biological role, catalyzes the hydrolysis of glycerophospholipids such as phosphatidylcholine (1,2-diacyl-sn-glycero-3-phosphocholine) and has a moderate activity to hydrolyze lysoglycerophospholipids such as lysophosphatidylcholine (1-acyl-sn-glycero-3-phosphocholine), but is unable to hydrolyze sphingomyelin. In addition to acting as an allergen, it possesses a potent hemolytic activity on red blood cells of mice (98.8% of hemolysis at 3.0 ug/ml). The chain is Phospholipase A1 verutoxin-2a from Vespa velutina (Asian yellow-legged hornet).